Here is an 89-residue protein sequence, read N- to C-terminus: Small ribosomal subunit protein uS15 (89 aa).

The protein belongs to the universal ribosomal protein uS15 family. In terms of assembly, part of the 30S ribosomal subunit. Forms a bridge to the 50S subunit in the 70S ribosome, contacting the 23S rRNA.

Functionally, one of the primary rRNA binding proteins, it binds directly to 16S rRNA where it helps nucleate assembly of the platform of the 30S subunit by binding and bridging several RNA helices of the 16S rRNA. In terms of biological role, forms an intersubunit bridge (bridge B4) with the 23S rRNA of the 50S subunit in the ribosome. In Lactobacillus gasseri (strain ATCC 33323 / DSM 20243 / BCRC 14619 / CIP 102991 / JCM 1131 / KCTC 3163 / NCIMB 11718 / NCTC 13722 / AM63), this protein is Small ribosomal subunit protein uS15.